Here is a 286-residue protein sequence, read N- to C-terminus: uncharacterized protein (286 aa).

The 243-residue stretch at 26–268 (PLIILCHGFC…DACHYDIYEG (243 aa)) folds into the AB hydrolase-1 domain.

It to E.coli YcjY.

This is an uncharacterized protein from Escherichia coli.